The chain runs to 717 residues: Cleavage stimulation factor subunit 3 (717 aa).

Ser2 carries the N-acetylserine modification. HAT repeat units lie at residues 45–77 (QPID…AEIK), 79–110 (KNYD…YVRE), 117–152 (SYKE…FLKG), 163–196 (QRIT…YEEG), 221–261 (KEYE…WEKS), 271–303 (LITK…YLEQ), 319–352 (LFSD…YEES), 354–387 (MKYE…FARR), and 458–494 (NEDN…FESN). The disordered stretch occupies residues 684 to 705 (VKRPNEDSDEDEEKGAVVPPVH). A Phosphoserine modification is found at Ser691.

In terms of assembly, homodimer. The CSTF complex is composed of CSTF1 (50 kDa subunit), CSTF2 (64 kDa subunit) and CSTF3 (77 kDa subunit). CSTF3 directly interacts with CSTF1 and CSTF2. Interacts with FIP1L1.

The protein localises to the nucleus. One of the multiple factors required for polyadenylation and 3'-end cleavage of mammalian pre-mRNAs. The polypeptide is Cleavage stimulation factor subunit 3 (CSTF3) (Homo sapiens (Human)).